We begin with the raw amino-acid sequence, 349 residues long: Small ribosomal subunit protein uS2 (349 aa).

The protein belongs to the universal ribosomal protein uS2 family.

This Methylocella silvestris (strain DSM 15510 / CIP 108128 / LMG 27833 / NCIMB 13906 / BL2) protein is Small ribosomal subunit protein uS2.